We begin with the raw amino-acid sequence, 234 residues long: Aspartate/glutamate leucyltransferase (234 aa).

It belongs to the R-transferase family. Bpt subfamily.

It is found in the cytoplasm. The catalysed reaction is N-terminal L-glutamyl-[protein] + L-leucyl-tRNA(Leu) = N-terminal L-leucyl-L-glutamyl-[protein] + tRNA(Leu) + H(+). It carries out the reaction N-terminal L-aspartyl-[protein] + L-leucyl-tRNA(Leu) = N-terminal L-leucyl-L-aspartyl-[protein] + tRNA(Leu) + H(+). Functions in the N-end rule pathway of protein degradation where it conjugates Leu from its aminoacyl-tRNA to the N-termini of proteins containing an N-terminal aspartate or glutamate. The chain is Aspartate/glutamate leucyltransferase from Hahella chejuensis (strain KCTC 2396).